Reading from the N-terminus, the 292-residue chain is Cyclin-dependent kinase A-2 (292 aa).

The region spanning 4–286 (YEKVEKIGEG…ARAALEHEYF (283 aa)) is the Protein kinase domain. Residues 10–18 (IGEGTYGVV) and Lys-33 contribute to the ATP site. Thr-14 is subject to Phosphothreonine. The residue at position 15 (Tyr-15) is a Phosphotyrosine. Asp-126 functions as the Proton acceptor in the catalytic mechanism. At Thr-160 the chain carries Phosphothreonine.

This sequence belongs to the protein kinase superfamily. CMGC Ser/Thr protein kinase family. CDC2/CDKX subfamily. As to expression, expressed in the dividing region of the root apex and in differentiated cells such as those in the sclerenchyma, pericycle and parenchyma of the central cylinder. Expressed in the intercalary meristem and the elongation zone of internodes.

It catalyses the reaction L-seryl-[protein] + ATP = O-phospho-L-seryl-[protein] + ADP + H(+). The catalysed reaction is L-threonyl-[protein] + ATP = O-phospho-L-threonyl-[protein] + ADP + H(+). It carries out the reaction [DNA-directed RNA polymerase] + ATP = phospho-[DNA-directed RNA polymerase] + ADP + H(+). This chain is Cyclin-dependent kinase A-2 (CDKA-2), found in Oryza sativa subsp. japonica (Rice).